A 219-amino-acid polypeptide reads, in one-letter code: GTP cyclohydrolase 1 (219 aa).

The tract at residues 1 to 37 (MDAVLKSLSVRLPDAADKRSDTGRPERVTERPTRQEA) is disordered. Residues 14–37 (DAADKRSDTGRPERVTERPTRQEA) are compositionally biased toward basic and acidic residues. Residues Cys108, His111, and Cys179 each coordinate Zn(2+).

It belongs to the GTP cyclohydrolase I family. In terms of assembly, homomer.

The catalysed reaction is GTP + H2O = 7,8-dihydroneopterin 3'-triphosphate + formate + H(+). Its pathway is cofactor biosynthesis; 7,8-dihydroneopterin triphosphate biosynthesis; 7,8-dihydroneopterin triphosphate from GTP: step 1/1. The chain is GTP cyclohydrolase 1 from Methylobacterium sp. (strain 4-46).